We begin with the raw amino-acid sequence, 249 residues long: Triosephosphate isomerase (249 aa).

A substrate-binding site is contributed by 9-11 (NWK). The active-site Electrophile is histidine 95. The active-site Proton acceptor is the glutamate 166. Substrate-binding positions include glycine 172, serine 211, and 232 to 233 (GG).

It belongs to the triosephosphate isomerase family. In terms of assembly, homodimer.

It is found in the cytoplasm. The catalysed reaction is D-glyceraldehyde 3-phosphate = dihydroxyacetone phosphate. It functions in the pathway carbohydrate biosynthesis; gluconeogenesis. It participates in carbohydrate degradation; glycolysis; D-glyceraldehyde 3-phosphate from glycerone phosphate: step 1/1. Its function is as follows. Involved in the gluconeogenesis. Catalyzes stereospecifically the conversion of dihydroxyacetone phosphate (DHAP) to D-glyceraldehyde-3-phosphate (G3P). The chain is Triosephosphate isomerase from Legionella pneumophila subsp. pneumophila (strain Philadelphia 1 / ATCC 33152 / DSM 7513).